The chain runs to 223 residues: Putative 3-methyladenine DNA glycosylase (223 aa).

Belongs to the DNA glycosylase MPG family.

The chain is Putative 3-methyladenine DNA glycosylase from Rhodococcus jostii (strain RHA1).